The following is an 83-amino-acid chain: Gas vesicle protein G1 (83 aa).

The protein belongs to the gas vesicle GvpG family. GvpF to GvpM interact with each other in vitro, and may form multi-subunit complex(es). Might interact with GvpA1.

The protein localises to the gas vesicle. Its function is as follows. Proteins GvpF to GvpM might be involved in nucleating gas vesicle formation. A minor component of the gas vesicle. Gas vesicles are hollow, gas filled proteinaceous nanostructures found in several microbial planktonic microorganisms. They allow positioning of halobacteria at the optimal depth for growth in the poorly aerated, shallow brine pools of their habitat. Expression of a 9.5 kb p-vac DNA fragment containing 2 divergently transcribed regions (gvpD-gvpE-gvpF-gvpG-gvpH-gvpI-gvpJ-gvpK-gvpL-gvpM and gvpA-gvpC-gvpN-gvpO) allows H.volcanii to produce gas vesicles. A minimal gas vesicle can be made in H.volcanii by gvpA1-gvpO1 plus gvpF1-gvpG1-gvpJ1-gvpK1-gvpL1-gvpM1; lack of enough GvpJ1 prevents formation. A similar region restores gas vesicle production in H.halobium without the p-vac locus, but it still has the c-vac locus. The protein is Gas vesicle protein G1 (gvpG11) of Halobacterium salinarum (strain ATCC 700922 / JCM 11081 / NRC-1) (Halobacterium halobium).